We begin with the raw amino-acid sequence, 256 residues long: MVKSHIGSWILVLFVAMWSDVALCKKRPKPGGGWNTGGSRYPGQGSPGGNRYPPQEGGDWGQPHGGGWGQPHVGGWGQPHGGGWGQPHGGGGWGQGGTHGQWNKPSKPKTNMKHVAGAAAAGAVVGGLGGYMLGSAMSRPLIHFGSDYEDRYYRENMYRYPNQVYYRPVDQYSNQNNFVHDCVNITVKQHTVTTTTKGENFTETDIKMMERVVEQMCITQYQRESEAYYQRGASVILFSSPPVILLISFLIFLIVG.

Residues 1-24 (MVKSHIGSWILVLFVAMWSDVALC) form the signal peptide. The segment at 25–233 (KKRPKPGGGW…ESEAYYQRGA (209 aa)) is interaction with GRB2, ERI3 and SYN1. Positions 28–110 (PKPGGGWNTG…QWNKPSKPKT (83 aa)) are disordered. 5 tandem repeats follow at residues 54–62 (PQEGGDWGQ), 63–70 (PHGGGWGQ), 71–78 (PHVGGWGQ), 79–86 (PHGGGWGQ), and 87–95 (PHGGGGWGQ). The interval 54–95 (PQEGGDWGQPHGGGWGQPHVGGWGQPHGGGWGQPHGGGGWGQ) is 5 X 8 AA tandem repeats of P-H-G-G-G-W-G-Q. The segment covering 58-99 (GDWGQPHGGGWGQPHVGGWGQPHGGGWGQPHGGGGWGQGGTH) has biased composition (gly residues). 11 residues coordinate Cu(2+): H64, G65, G66, H72, G74, H80, G81, G82, H88, G90, and G91. Residues C182 and C217 are joined by a disulfide bond. N-linked (GlcNAc...) asparagine glycans are attached at residues N184 and N200. A233 is lipidated: GPI-anchor amidated alanine. Residues 234–256 (SVILFSSPPVILLISFLIFLIVG) constitute a propeptide, removed in mature form.

It belongs to the prion family. In terms of assembly, monomer and homodimer. Has a tendency to aggregate into amyloid fibrils containing a cross-beta spine, formed by a steric zipper of superposed beta-strands. Soluble oligomers may represent an intermediate stage on the path to fibril formation. Copper binding may promote oligomerization. Interacts with GRB2, APP, ERI3/PRNPIP and SYN1. Mislocalized cytosolically exposed PrP interacts with MGRN1; this interaction alters MGRN1 subcellular location and causes lysosomal enlargement. Interacts with KIAA1191.

It localises to the cell membrane. The protein resides in the golgi apparatus. In terms of biological role, its primary physiological function is unclear. Has cytoprotective activity against internal or environmental stresses. May play a role in neuronal development and synaptic plasticity. May be required for neuronal myelin sheath maintenance. May play a role in iron uptake and iron homeostasis. Soluble oligomers are toxic to cultured neuroblastoma cells and induce apoptosis (in vitro). Association with GPC1 (via its heparan sulfate chains) targets PRNP to lipid rafts. Also provides Cu(2+) or Zn(2+) for the ascorbate-mediated GPC1 deaminase degradation of its heparan sulfate side chains. The protein is Major prion protein 2 of Tragelaphus strepsiceros (Greater kudu).